The sequence spans 1080 residues: Presequence protease 2, chloroplastic/mitochondrial (1080 aa).

A chloroplast and mitochondrion-targeting transit peptide spans 1 to 84 (MLRSLTCSST…NGQFSRLSIR (84 aa)). His161 is a Zn(2+) binding site. Glu164 serves as the catalytic Proton acceptor. A Zn(2+)-binding site is contributed by His165. Glu239 is an active-site residue. Glu261 is a Zn(2+) binding site. Arg704 is a binding site for Mg(2+).

The protein belongs to the peptidase M16 family. PreP subfamily. Homodimer. The cofactor is Zn(2+). Requires Mg(2+) as cofactor. Expressed in leaves, flowers and roots, but not detected in siliques and shoots.

It localises to the plastid. Its subcellular location is the chloroplast stroma. It is found in the mitochondrion matrix. Completely inhibited by the metal chelator orthophenanthroline. ATP-independent protease that degrades both mitochondrial and chloroplastic transit peptides after their cleavage. Also degrades other unstructured peptides. Specific for peptides in the range of 10 to 65 residues. Shows a preference for cleavage after small polar residues and before basic residues, but without any positional preference. In Arabidopsis thaliana (Mouse-ear cress), this protein is Presequence protease 2, chloroplastic/mitochondrial (PREP2).